A 381-amino-acid chain; its full sequence is Chaperone protein DnaJ (381 aa).

Residues 3–66 enclose the J domain; the sequence is DYYETLGVER…DKRRMYDSGV (64 aa). The segment at 129–211 adopts a CR-type zinc-finger fold; that stretch reads GGTAHVKINT…CMGHGRVRTT (83 aa). The Zn(2+) site is built by Cys142, Cys145, Cys159, Cys162, Cys185, Cys188, Cys199, and Cys202. 4 CXXCXGXG motif repeats span residues 142–149, 159–166, 185–192, and 199–206; these read CQECGGSG, CPDCHGQG, CERCEGHG, and CPSCMGHG. The disordered stretch occupies residues 355 to 381; it reads ATHVSQASRPQAGQKKGFFSKLKDALS. Over residues 356–365 the composition is skewed to polar residues; sequence THVSQASRPQ.

Belongs to the DnaJ family. In terms of assembly, homodimer. Zn(2+) is required as a cofactor.

Its subcellular location is the cytoplasm. In terms of biological role, participates actively in the response to hyperosmotic and heat shock by preventing the aggregation of stress-denatured proteins and by disaggregating proteins, also in an autonomous, DnaK-independent fashion. Unfolded proteins bind initially to DnaJ; upon interaction with the DnaJ-bound protein, DnaK hydrolyzes its bound ATP, resulting in the formation of a stable complex. GrpE releases ADP from DnaK; ATP binding to DnaK triggers the release of the substrate protein, thus completing the reaction cycle. Several rounds of ATP-dependent interactions between DnaJ, DnaK and GrpE are required for fully efficient folding. Also involved, together with DnaK and GrpE, in the DNA replication of plasmids through activation of initiation proteins. This chain is Chaperone protein DnaJ, found in Bifidobacterium longum (strain NCC 2705).